Reading from the N-terminus, the 539-residue chain is GMP synthase [glutamine-hydrolyzing] (539 aa).

One can recognise a Glutamine amidotransferase type-1 domain in the interval 4 to 202; sequence KILILDFGSQ…VLQIAGAKPD (199 aa). Cysteine 81 serves as the catalytic Nucleophile. Residues histidine 176 and glutamate 178 contribute to the active site. In terms of domain architecture, GMPS ATP-PPase spans 203–395; sequence WIMKNHIEEA…LGLPPEMVYR (193 aa). 230 to 236 contacts ATP; that stretch reads SGGVDSS.

Homodimer.

It catalyses the reaction XMP + L-glutamine + ATP + H2O = GMP + L-glutamate + AMP + diphosphate + 2 H(+). It participates in purine metabolism; GMP biosynthesis; GMP from XMP (L-Gln route): step 1/1. Catalyzes the synthesis of GMP from XMP. This chain is GMP synthase [glutamine-hydrolyzing], found in Burkholderia orbicola (strain AU 1054).